The chain runs to 154 residues: Putative pre-16S rRNA nuclease (154 aa).

The protein belongs to the YqgF nuclease family.

It localises to the cytoplasm. Its function is as follows. Could be a nuclease involved in processing of the 5'-end of pre-16S rRNA. This chain is Putative pre-16S rRNA nuclease, found in Ruegeria pomeroyi (strain ATCC 700808 / DSM 15171 / DSS-3) (Silicibacter pomeroyi).